Here is an 863-residue protein sequence, read N- to C-terminus: uncharacterized protein (863 aa).

The N-terminal stretch at 1–29 (MHQSGSVSLCRSAISVLVATALYSPIALA) is a signal peptide. Residues 595–863 (GVSYDTAMWS…NTQAGVVWTF (269 aa)) enclose the Autotransporter domain.

It localises to the cell outer membrane. This is an uncharacterized protein from Escherichia coli (strain K12).